A 406-amino-acid chain; its full sequence is Vitamin D3 dihydroxylase (406 aa).

The span at 1–15 (MTDTATTPQTTDAPA) shows a compositional bias: low complexity. Positions 1 to 24 (MTDTATTPQTTDAPAFPSNRSCPY) are disordered. Residue Thr81 coordinates calciol. Residues His103 and Arg107 each coordinate heme. Positions 193, 236, and 293 each coordinate calciol. Residues Arg297, His353, and Cys355 each coordinate heme.

Belongs to the cytochrome P450 family. Requires heme as cofactor.

The protein resides in the cytoplasm. The enzyme catalyses calciol + 2 reduced [2Fe-2S]-[ferredoxin] + O2 + 2 H(+) = calcidiol + 2 oxidized [2Fe-2S]-[ferredoxin] + H2O. The catalysed reaction is calcidiol + 2 reduced [2Fe-2S]-[ferredoxin] + O2 + 2 H(+) = calcitriol + 2 oxidized [2Fe-2S]-[ferredoxin] + H2O. Its function is as follows. Involved in the metabolism of vitamin D3 (calciol) and of a number of sulfonylurea herbicides. Catalyzes the two-step hydroxylation (25- and 1-alpha-hydroxylation) of vitamin D3 (VD3) to yield its active form 1-alpha,25-dihydroxyvitamin D3 (calcitriol). The first step is the hydroxylation of the C-25 position of VD3 to produce 25-hydroxyvitamin D3 (calcidiol). The second reaction is the hydroxylation of the C1-alpha-position of calcidiol to produce calcitriol. It can also hydroxylate vitamin D2. This is Vitamin D3 dihydroxylase from Streptomyces griseolus.